A 467-amino-acid polypeptide reads, in one-letter code: MRFTRYTTPFFSLLLSGCVVGPNYAPPEMPLPAKFSEGGVTSNGDVTVVAWWTAFNDPMLTSYVEQGISQNLDVQQAIERIDLAAANVTIAEASALPDLTLSGSHTVSGQKGKLRKQTYTSNTSTGELSLSWLLDFGVYKRNTESAEAALDAAYASVDMAKLAFINDIISSYVDARYYQRRLALSQANLKSRRETFELTKSKFAAGAVARMDVVRAEGLVQSTLAEIPSLDANFRISAHRIATLLGKPAGSMVEEIAKGSNQPAFRADVNVGIPADIIRNRPDIRKAERDLADSTAQIGVAEAKLFPSITLSGSISPSGGINERGVYGNLTPWSFGPKLKLPILDGGGLRADVDSAKSKATVSYLKWKSRVLNAIEQVENALVAMQREGRTVRALKREVEIAQETLRLSTSSYKDGASSLLDLLEAQRSLSVTQASLARAVQEWAKLYAVLNIAIGSGYNPVAKAGL.

Residues 1–17 (MRFTRYTTPFFSLLLSG) form the signal peptide. The N-palmitoyl cysteine moiety is linked to residue cysteine 18. Residue cysteine 18 is the site of S-diacylglycerol cysteine attachment.

It belongs to the outer membrane factor (OMF) (TC 1.B.17) family.

The protein localises to the cell membrane. The chain is Nodulation protein T (nodT) from Rhizobium leguminosarum bv. trifolii.